Reading from the N-terminus, the 234-residue chain is Ribose-5-phosphate isomerase A (234 aa).

Substrate-binding positions include 28–31, 85–88, and 98–101; these read TGST, DGAD, and KGLG. Glutamate 107 functions as the Proton acceptor in the catalytic mechanism. Residue lysine 125 participates in substrate binding.

It belongs to the ribose 5-phosphate isomerase family. In terms of assembly, homodimer.

The enzyme catalyses aldehydo-D-ribose 5-phosphate = D-ribulose 5-phosphate. It functions in the pathway carbohydrate degradation; pentose phosphate pathway; D-ribose 5-phosphate from D-ribulose 5-phosphate (non-oxidative stage): step 1/1. In terms of biological role, catalyzes the reversible conversion of ribose-5-phosphate to ribulose 5-phosphate. The polypeptide is Ribose-5-phosphate isomerase A (Roseiflexus castenholzii (strain DSM 13941 / HLO8)).